The chain runs to 606 residues: Phosphogluconate dehydratase (606 aa).

Positions 156 and 223 each coordinate [4Fe-4S] cluster.

This sequence belongs to the IlvD/Edd family. [4Fe-4S] cluster serves as cofactor.

The catalysed reaction is 6-phospho-D-gluconate = 2-dehydro-3-deoxy-6-phospho-D-gluconate + H2O. It participates in carbohydrate metabolism; Entner-Doudoroff pathway. In terms of biological role, catalyzes the dehydration of 6-phospho-D-gluconate to 2-dehydro-3-deoxy-6-phospho-D-gluconate. The polypeptide is Phosphogluconate dehydratase (Rhizobium meliloti (strain 1021) (Ensifer meliloti)).